Reading from the N-terminus, the 437-residue chain is Bile acid CoA-transferase BaiK (437 aa).

Aspartate 171 acts as the Nucleophile in catalysis.

Belongs to the CoA-transferase III family.

The catalysed reaction is deoxycholoyl-CoA + cholate = choloyl-CoA + deoxycholate. The enzyme catalyses allodeoxycholoyl-CoA + cholate = allodeoxycholate + choloyl-CoA. It carries out the reaction allocholate + deoxycholoyl-CoA = allocholoyl-CoA + deoxycholate. It catalyses the reaction allocholate + allodeoxycholoyl-CoA = allocholoyl-CoA + allodeoxycholate. The catalysed reaction is ursodeoxycholate + deoxycholoyl-CoA = ursodeoxycholoyl-CoA + deoxycholate. The enzyme catalyses allodeoxycholoyl-CoA + ursodeoxycholate = ursodeoxycholoyl-CoA + allodeoxycholate. It participates in lipid metabolism; bile acid biosynthesis. In terms of biological role, functions in the bile acid 7alpha-dehydroxylation pathway, which forms secondary bile acids via the 7alpha-dehydroxylation of primary bile acids, and is carried out by intestinal anaerobic bacteria. Acts as a bile acid CoA transferase with broad bile acid substrate specificity. Catalyzes the transfer of the CoA moiety of secondary bile acid-CoA compounds to primary bile acids. Can use deoxycholoyl-CoA and allodeoxycholoyl-CoA as bile acid CoA donors and cholate, allocholate and ursodeoxycholate as bile acid CoA acceptors. Shows no activity when lithocholoyl-CoA is used as the CoA donor. This is Bile acid CoA-transferase BaiK from Clostridium scindens (strain JCM 10418 / VPI 12708).